The primary structure comprises 862 residues: Cell surface glycoprotein (862 aa).

Residues 1-34 form the signal peptide; sequence MTDTQQKIKAVLLTVLMVTSVFAATIAFSGAAAA. 3 disordered regions span residues 35–60, 101–126, and 200–220; these read SERG…SAGN, ILLE…EGTE, and VNTN…DRDD. A compositionally biased stretch (polar residues) spans 43–57; that stretch reads YTTGPTDGNQDNVDS. Over residues 206–220 the composition is skewed to basic and acidic residues; sequence NDDHPNPAADGDRDD. N442, N520, N550, N702, and N761 each carry an N-linked (GlcNAc...) asparagine glycan. Positions 752–838 are disordered; sequence LSDENVEPGN…TEEATTEATG (87 aa). The segment covering 784–801 has biased composition (acidic residues); the sequence is SLEEEQPATDTPEPDTDT. Low complexity predominate over residues 802–815; the sequence is PEPATDTPEPATDT. The segment covering 816-833 has biased composition (acidic residues); the sequence is PEPDTDTPEPDTETEEAT. The helical transmembrane segment at 838-858 threads the bilayer; sequence GPGFTAAIALIALVAAALLAV. A PGF sorting signal motif is present at residues 839–841; the sequence is PGF.

It belongs to the halobacterial S-layer protein family. Glycosylated. Post-translationally, cleaved by the archaeosortase ArtA at the C-terminus, with removal of a short hydrophobic segment. In terms of processing, lipidation.

It localises to the secreted. The protein localises to the cell wall. Its subcellular location is the S-layer. The protein resides in the cell membrane. In terms of biological role, S-layer protein. The S-layer is a paracrystalline mono-layered assembly of proteins which coat the surface of the cell. This Haloarcula japonica (strain ATCC 49778 / DSM 6131 / JCM 7785 / NBRC 101032 / NCIMB 13157 / TR-1) protein is Cell surface glycoprotein.